Here is a 47-residue protein sequence, read N- to C-terminus: Large ribosomal subunit protein bL33A (47 aa).

It belongs to the bacterial ribosomal protein bL33 family.

This Staphylococcus aureus (strain JH1) protein is Large ribosomal subunit protein bL33A.